The sequence spans 249 residues: CDP-diacylglycerol pyrophosphatase (249 aa).

A helical transmembrane segment spans residues 7 to 27; it reads FLLAVVIVAAVAGIGYWKLAA.

Belongs to the Cdh family.

The protein resides in the cell inner membrane. It carries out the reaction a CDP-1,2-diacyl-sn-glycerol + H2O = a 1,2-diacyl-sn-glycero-3-phosphate + CMP + 2 H(+). It functions in the pathway phospholipid metabolism; CDP-diacylglycerol degradation; phosphatidate from CDP-diacylglycerol: step 1/1. The protein is CDP-diacylglycerol pyrophosphatase of Citrobacter koseri (strain ATCC BAA-895 / CDC 4225-83 / SGSC4696).